The primary structure comprises 452 residues: UDP-N-acetylmuramoylalanine--D-glutamate ligase (452 aa).

Residue 119-125 coordinates ATP; it reads GSNGKTT.

Belongs to the MurCDEF family.

The protein resides in the cytoplasm. The enzyme catalyses UDP-N-acetyl-alpha-D-muramoyl-L-alanine + D-glutamate + ATP = UDP-N-acetyl-alpha-D-muramoyl-L-alanyl-D-glutamate + ADP + phosphate + H(+). It participates in cell wall biogenesis; peptidoglycan biosynthesis. Cell wall formation. Catalyzes the addition of glutamate to the nucleotide precursor UDP-N-acetylmuramoyl-L-alanine (UMA). The polypeptide is UDP-N-acetylmuramoylalanine--D-glutamate ligase (Streptococcus pyogenes serotype M5 (strain Manfredo)).